The primary structure comprises 138 residues: Large ribosomal subunit protein uL16 (138 aa).

Basic residues predominate over residues 1 to 16 (MLIPRRVKHRKQHHPG). A disordered region spans residues 1–24 (MLIPRRVKHRKQHHPGRSGAATGG).

It belongs to the universal ribosomal protein uL16 family. In terms of assembly, part of the 50S ribosomal subunit.

Binds 23S rRNA and is also seen to make contacts with the A and possibly P site tRNAs. The protein is Large ribosomal subunit protein uL16 of Paenarthrobacter aurescens (strain TC1).